Consider the following 889-residue polypeptide: Alanine--tRNA ligase (889 aa).

Histidine 566, histidine 570, cysteine 683, and histidine 687 together coordinate Zn(2+).

This sequence belongs to the class-II aminoacyl-tRNA synthetase family. The cofactor is Zn(2+).

The protein resides in the cytoplasm. The catalysed reaction is tRNA(Ala) + L-alanine + ATP = L-alanyl-tRNA(Ala) + AMP + diphosphate. Functionally, catalyzes the attachment of alanine to tRNA(Ala) in a two-step reaction: alanine is first activated by ATP to form Ala-AMP and then transferred to the acceptor end of tRNA(Ala). Also edits incorrectly charged Ser-tRNA(Ala) and Gly-tRNA(Ala) via its editing domain. This Herpetosiphon aurantiacus (strain ATCC 23779 / DSM 785 / 114-95) protein is Alanine--tRNA ligase.